Consider the following 365-residue polypeptide: Metallophosphoesterase 1 homolog (365 aa).

Residues 10–30 (PILLAIILVVYNEYFIFFIAF) form a helical membrane-spanning segment. Positions 54, 96, 132, 208, 262, and 264 each coordinate a divalent metal cation. The chain crosses the membrane as a helical span at residues 319-339 (ILQIMVYIFGGIGIVILAFIL).

Belongs to the metallophosphoesterase superfamily. MPPE1 family. The cofactor is Mn(2+).

It localises to the endoplasmic reticulum-Golgi intermediate compartment membrane. The protein resides in the golgi apparatus. Its subcellular location is the cis-Golgi network membrane. In terms of biological role, metallophosphoesterase required for transport of GPI-anchor proteins from the endoplasmic reticulum to the Golgi. Acts in lipid remodeling steps of GPI-anchor maturation by mediating the removal of a side-chain ethanolamine-phosphate (EtNP) from the second Man (Man2) of the GPI intermediate, an essential step for efficient transport of GPI-anchor proteins. In Caenorhabditis elegans, this protein is Metallophosphoesterase 1 homolog.